Consider the following 533-residue polypeptide: (E)-beta-farnesene synthase (533 aa).

Positions 286, 290, 430, 434, and 438 each coordinate Mg(2+). The DDXXD motif signature appears at 286–290 (DDMMD).

This sequence belongs to the terpene synthase family. It depends on Mg(2+) as a cofactor. Co(2+) serves as cofactor. Mn(2+) is required as a cofactor.

Its subcellular location is the cytoplasm. It catalyses the reaction (2E,6E)-farnesyl diphosphate = (E)-beta-farnesene + diphosphate. Its pathway is secondary metabolite biosynthesis; terpenoid biosynthesis. In terms of biological role, sesquiterpene cyclase catalyzing the production of beta-farnesene and alpha-bergamotene in equal amounts from farnesyl diphosphate. Involved in indirect defense by producing volatile signals attracting natural enemies of herbivores. This chain is (E)-beta-farnesene synthase, found in Zea mays subsp. huehuetenangensis (San Antonio Huista teosinte).